The chain runs to 60 residues: Metallothionein A (60 aa).

The beta stretch occupies residues 1 to 28 (MDPCECSKSGNCNCGGSCTCTNCSCKSC). A divalent metal cation contacts are provided by Cys4, Cys6, Cys12, Cys14, Cys18, Cys20, Cys23, Cys25, Cys28, Cys32, Cys33, Cys35, Cys36, Cys40, Cys43, Cys47, Cys49, Cys54, Cys58, and Cys59. The interval 29–60 (KKSCCPCCPSGCTKCASGCVCKGKTCDTSCCQ) is alpha.

Belongs to the metallothionein superfamily. Type 1 family.

In terms of biological role, metallothioneins have a high content of cysteine residues that bind various heavy metals. This chain is Metallothionein A (mta), found in Parachaenichthys charcoti (Charcot's dragonfish).